A 79-amino-acid polypeptide reads, in one-letter code: Sulfur carrier protein TusA (79 aa).

Cys17 serves as the catalytic Cysteine persulfide intermediate.

Belongs to the sulfur carrier protein TusA family.

Its subcellular location is the cytoplasm. Its function is as follows. Sulfur carrier protein which probably makes part of a sulfur-relay system. The sequence is that of Sulfur carrier protein TusA from Actinobacillus pleuropneumoniae serotype 5b (strain L20).